Here is a 905-residue protein sequence, read N- to C-terminus: DNA-directed RNA polymerase subunit Rpo1N (905 aa).

Zn(2+) contacts are provided by cysteine 60, cysteine 63, cysteine 70, histidine 73, cysteine 100, cysteine 103, cysteine 147, and cysteine 150. Residues aspartate 461, aspartate 463, and aspartate 465 each contribute to the Mg(2+) site.

The protein belongs to the RNA polymerase beta' chain family. In terms of assembly, part of the RNA polymerase complex. It depends on Mg(2+) as a cofactor. Zn(2+) is required as a cofactor.

It is found in the cytoplasm. The enzyme catalyses RNA(n) + a ribonucleoside 5'-triphosphate = RNA(n+1) + diphosphate. DNA-dependent RNA polymerase (RNAP) catalyzes the transcription of DNA into RNA using the four ribonucleoside triphosphates as substrates. Forms the clamp head domain. This chain is DNA-directed RNA polymerase subunit Rpo1N, found in Thermococcus celer.